Here is a 596-residue protein sequence, read N- to C-terminus: tRNA(Met) cytidine acetyltransferase TmcA (596 aa).

ATP-binding positions include glutamine 138, 160-169 (GRGKSTLAGK), and arginine 285. One can recognise an N-acetyltransferase domain in the interval 328–481 (SDLRRLFDAQ…SGYHSAMMLY (154 aa)). Residues 406–408 (IAV) and 413–419 (QKQGIGK) each bind acetyl-CoA.

This sequence belongs to the RNA cytidine acetyltransferase family. TmcA subfamily.

It is found in the cytoplasm. The catalysed reaction is cytidine(34) in elongator tRNA(Met) + acetyl-CoA + ATP + H2O = N(4)-acetylcytidine(34) in elongator tRNA(Met) + ADP + phosphate + CoA + H(+). Its function is as follows. Catalyzes the formation of N(4)-acetylcytidine (ac(4)C) at the wobble position of tRNA(Met), by using acetyl-CoA as an acetyl donor and ATP (or GTP). This Actinobacillus pleuropneumoniae serotype 5b (strain L20) protein is tRNA(Met) cytidine acetyltransferase TmcA.